Reading from the N-terminus, the 37-residue chain is Cytochrome b6-f complex subunit 5 (37 aa).

The chain crosses the membrane as a helical span at residues 5-25 (LLSGIVPGLIPITLAGSFVIA).

Belongs to the PetG family. The 4 large subunits of the cytochrome b6-f complex are cytochrome b6, subunit IV (17 kDa polypeptide, PetD), cytochrome f and the Rieske protein, while the 4 small subunits are PetG, PetL, PetM and PetN. The complex functions as a dimer.

The protein localises to the plastid membrane. Functionally, component of the cytochrome b6-f complex, which mediates electron transfer between photosystem II (PSII) and photosystem I (PSI), cyclic electron flow around PSI, and state transitions. PetG is required for either the stability or assembly of the cytochrome b6-f complex. The protein is Cytochrome b6-f complex subunit 5 of Aneura mirabilis (Parasitic liverwort).